The primary structure comprises 95 residues: Large ribosomal subunit protein bL25 (95 aa).

It belongs to the bacterial ribosomal protein bL25 family. In terms of assembly, part of the 50S ribosomal subunit; part of the 5S rRNA/L5/L18/L25 subcomplex. Contacts the 5S rRNA. Binds to the 5S rRNA independently of L5 and L18.

Functionally, this is one of the proteins that binds to the 5S RNA in the ribosome where it forms part of the central protuberance. The chain is Large ribosomal subunit protein bL25 from Haemophilus influenzae (strain ATCC 51907 / DSM 11121 / KW20 / Rd).